The following is a 573-amino-acid chain: Putative adenine deaminase PTO1085 (573 aa).

Belongs to the metallo-dependent hydrolases superfamily. Adenine deaminase family.

The enzyme catalyses adenine + H2O + H(+) = hypoxanthine + NH4(+). The chain is Putative adenine deaminase PTO1085 from Picrophilus torridus (strain ATCC 700027 / DSM 9790 / JCM 10055 / NBRC 100828 / KAW 2/3).